Reading from the N-terminus, the 80-residue chain is Exodeoxyribonuclease 7 small subunit (80 aa).

Belongs to the XseB family. Heterooligomer composed of large and small subunits.

Its subcellular location is the cytoplasm. It carries out the reaction Exonucleolytic cleavage in either 5'- to 3'- or 3'- to 5'-direction to yield nucleoside 5'-phosphates.. Bidirectionally degrades single-stranded DNA into large acid-insoluble oligonucleotides, which are then degraded further into small acid-soluble oligonucleotides. The chain is Exodeoxyribonuclease 7 small subunit from Rickettsia akari (strain Hartford).